The following is a 446-amino-acid chain: Glutamine synthetase (446 aa).

Residues 18 to 103 enclose the GS beta-grasp domain; that stretch reads ENVRYLRLQF…LICDVYKTDG (86 aa). Residues 110-446 enclose the GS catalytic domain; sequence PRANLKRVLK…WERDQYMKQY (337 aa). Mg(2+)-binding residues include E134 and E136. Residue E186 participates in ATP binding. 2 residues coordinate Mg(2+): E191 and E198. L-glutamate contacts are provided by residues 242–243 and G243; that span reads NG. Position 247 (H247) interacts with Mg(2+). S251 is an ATP binding site. Positions 300, 306, and 318 each coordinate L-glutamate. ATP is bound by residues R318 and R323. E335 provides a ligand contact to Mg(2+). Position 337 (R337) interacts with L-glutamate.

The protein belongs to the glutamine synthetase family. In terms of assembly, oligomer of 12 subunits arranged in the form of two hexagons. In its feedback-inhibited form, interacts with TnrA in order to block its DNA-binding activity. Mg(2+) serves as cofactor.

It localises to the cytoplasm. The enzyme catalyses L-glutamate + NH4(+) + ATP = L-glutamine + ADP + phosphate + H(+). Inhibited by glutamine. Functionally, glutamine synthetase (GS) is an unusual multitasking protein that functions as an enzyme, a transcription coregulator, and a chaperone in ammonium assimilation and in the regulation of genes involved in nitrogen metabolism. It catalyzes the ATP-dependent biosynthesis of glutamine from glutamate and ammonia. Feedback-inhibited GlnA also interacts with and regulates the activity of the transcriptional regulator TnrA. During nitrogen limitation, TnrA is in its DNA-binding active state and turns on the transcription of genes required for nitrogen assimilation. Under conditions of nitrogen excess, feedback-inhibited GlnA forms a stable complex with TnrA, which inhibits its DNA-binding activity. In contrast, feedback-inhibited GlnA acts as a chaperone to stabilize the DNA-binding activity of GlnR, which represses the transcription of nitrogen assimilation genes. The polypeptide is Glutamine synthetase (Staphylococcus aureus (strain N315)).